The sequence spans 154 residues: uncharacterized protein (154 aa).

Positions 14–146 constitute an HTH marR-type domain; the sequence is AMNLYRVFAR…LIVLLKKAGI (133 aa). The segment at residues 60 to 83 is a DNA-binding region (H-T-H motif); the sequence is LQQIGSRLLLVSGNVTYVIDKLER.

This is an uncharacterized protein from Bacillus subtilis (strain 168).